Reading from the N-terminus, the 250-residue chain is Triosephosphate isomerase, glycosomal (250 aa).

Substrate contacts are provided by asparagine 11 and lysine 13. The Electrophile role is filled by histidine 95. Glutamate 167 functions as the Proton acceptor in the catalytic mechanism.

It belongs to the triosephosphate isomerase family. As to quaternary structure, homodimer.

The protein resides in the glycosome. The enzyme catalyses D-glyceraldehyde 3-phosphate = dihydroxyacetone phosphate. It participates in carbohydrate biosynthesis; gluconeogenesis. The protein operates within carbohydrate degradation; glycolysis; D-glyceraldehyde 3-phosphate from glycerone phosphate: step 1/1. The polypeptide is Triosephosphate isomerase, glycosomal (Trypanosoma brucei brucei).